A 490-amino-acid polypeptide reads, in one-letter code: GTPase Der (490 aa).

EngA-type G domains follow at residues proline 3–methionine 166 and isoleucine 200–threonine 373. GTP contacts are provided by residues glycine 9 to serine 16, aspartate 56 to isoleucine 60, asparagine 118 to aspartate 121, glycine 206 to serine 213, aspartate 253 to valine 257, and asparagine 318 to aspartate 321. The KH-like domain maps to arginine 374–glycine 458.

Belongs to the TRAFAC class TrmE-Era-EngA-EngB-Septin-like GTPase superfamily. EngA (Der) GTPase family. In terms of assembly, associates with the 50S ribosomal subunit.

GTPase that plays an essential role in the late steps of ribosome biogenesis. The chain is GTPase Der from Shewanella piezotolerans (strain WP3 / JCM 13877).